Consider the following 195-residue polypeptide: MYEYLDGVVVNVNPAYIVVDVNGVGFLVNVANPYSFELDAKQKVFVHQAVSENDQTLYGFKKAEDKELFLNLLKVKGIGPKSALAILANDDHTGLINAINNDDVSYLKKFPKIGPKAAQQIILDLKGKVAVENEVGTLFDLSTTSNQALDEALEALIALGYSEKEVKKLTKKLSEQTDRTTDQYISSGLKLLMKG.

The domain I stretch occupies residues 1–61 (MYEYLDGVVV…ENDQTLYGFK (61 aa)). A domain II region spans residues 62 to 139 (KAEDKELFLN…AVENEVGTLF (78 aa)). The flexible linker stretch occupies residues 139-143 (FDLST). The domain III stretch occupies residues 144-195 (TSNQALDEALEALIALGYSEKEVKKLTKKLSEQTDRTTDQYISSGLKLLMKG).

The protein belongs to the RuvA family. In terms of assembly, homotetramer. Forms an RuvA(8)-RuvB(12)-Holliday junction (HJ) complex. HJ DNA is sandwiched between 2 RuvA tetramers; dsDNA enters through RuvA and exits via RuvB. An RuvB hexamer assembles on each DNA strand where it exits the tetramer. Each RuvB hexamer is contacted by two RuvA subunits (via domain III) on 2 adjacent RuvB subunits; this complex drives branch migration. In the full resolvosome a probable DNA-RuvA(4)-RuvB(12)-RuvC(2) complex forms which resolves the HJ.

It is found in the cytoplasm. Its function is as follows. The RuvA-RuvB-RuvC complex processes Holliday junction (HJ) DNA during genetic recombination and DNA repair, while the RuvA-RuvB complex plays an important role in the rescue of blocked DNA replication forks via replication fork reversal (RFR). RuvA specifically binds to HJ cruciform DNA, conferring on it an open structure. The RuvB hexamer acts as an ATP-dependent pump, pulling dsDNA into and through the RuvAB complex. HJ branch migration allows RuvC to scan DNA until it finds its consensus sequence, where it cleaves and resolves the cruciform DNA. This is Holliday junction branch migration complex subunit RuvA from Pediococcus pentosaceus (strain ATCC 25745 / CCUG 21536 / LMG 10740 / 183-1w).